The chain runs to 195 residues: Thioredoxin reductase-like selenoprotein T (195 aa).

Residues 1–19 (MRLLLLLLVAASAMVRSEA) form the signal peptide. Positions 46–49 (CVSU) form a cross-link, cysteinyl-selenocysteine (Cys-Sec). Residue selenocysteine 49 is a non-standard amino acid, selenocysteine. The chain crosses the membrane as a helical span at residues 85–103 (IASFLSVFKLVLIGLIIVG).

This sequence belongs to the SelWTH family. Selenoprotein T subfamily. May contain a selenide-sulfide bond between Cys-46 and Sec-49. This bond is speculated to serve as redox-active pair. As to expression, ubiquitous. Highly expressed in the endocrine pancreas.

The protein localises to the endoplasmic reticulum membrane. The enzyme catalyses [thioredoxin]-dithiol + NADP(+) = [thioredoxin]-disulfide + NADPH + H(+). In terms of biological role, selenoprotein with thioredoxin reductase-like oxidoreductase activity. Protects dopaminergic neurons against oxidative stress and cell death. Involved in ADCYAP1/PACAP-induced calcium mobilization and neuroendocrine secretion. Plays a role in fibroblast anchorage and redox regulation. In gastric smooth muscle, modulates the contraction processes through the regulation of calcium release and MYLK activation. In pancreatic islets, involved in the control of glucose homeostasis, contributes to prolonged ADCYAP1/PACAP-induced insulin secretion. The chain is Thioredoxin reductase-like selenoprotein T from Homo sapiens (Human).